Here is a 211-residue protein sequence, read N- to C-terminus: Nucleoside triphosphate pyrophosphatase (211 aa).

D75 (proton acceptor) is an active-site residue.

Belongs to the Maf family. Requires a divalent metal cation as cofactor.

It localises to the cytoplasm. It catalyses the reaction a ribonucleoside 5'-triphosphate + H2O = a ribonucleoside 5'-phosphate + diphosphate + H(+). It carries out the reaction a 2'-deoxyribonucleoside 5'-triphosphate + H2O = a 2'-deoxyribonucleoside 5'-phosphate + diphosphate + H(+). Nucleoside triphosphate pyrophosphatase. May have a dual role in cell division arrest and in preventing the incorporation of modified nucleotides into cellular nucleic acids. The protein is Nucleoside triphosphate pyrophosphatase of Prochlorococcus marinus (strain NATL2A).